A 240-amino-acid polypeptide reads, in one-letter code: Putative N-acetylmannosamine-6-phosphate 2-epimerase (240 aa).

Belongs to the NanE family.

It catalyses the reaction an N-acyl-D-glucosamine 6-phosphate = an N-acyl-D-mannosamine 6-phosphate. Its pathway is amino-sugar metabolism; N-acetylneuraminate degradation; D-fructose 6-phosphate from N-acetylneuraminate: step 3/5. In terms of biological role, converts N-acetylmannosamine-6-phosphate (ManNAc-6-P) to N-acetylglucosamine-6-phosphate (GlcNAc-6-P). This Vibrio cholerae serotype O1 (strain ATCC 39315 / El Tor Inaba N16961) protein is Putative N-acetylmannosamine-6-phosphate 2-epimerase.